The following is a 175-amino-acid chain: Bifunctional protein PyrR (175 aa).

Residues Thr-40 to Arg-41, Asp-102 to Thr-110, Arg-135, and Val-159 contribute to the substrate site. The short motif at Val-98–Thr-110 is the PRPP-binding element.

Belongs to the purine/pyrimidine phosphoribosyltransferase family. PyrR subfamily. As to quaternary structure, homodimer and homohexamer; in equilibrium.

It catalyses the reaction UMP + diphosphate = 5-phospho-alpha-D-ribose 1-diphosphate + uracil. Its function is as follows. Regulates transcriptional attenuation of the pyrimidine nucleotide (pyr) operon by binding in a uridine-dependent manner to specific sites on pyr mRNA. This disrupts an antiterminator hairpin in the RNA and favors formation of a downstream transcription terminator, leading to a reduced expression of downstream genes. In terms of biological role, also displays a weak uracil phosphoribosyltransferase activity which is not physiologically significant. This Staphylococcus haemolyticus (strain JCSC1435) protein is Bifunctional protein PyrR.